An 819-amino-acid polypeptide reads, in one-letter code: Protein SCARECROW (819 aa).

4 disordered regions span residues 6-49 (LFNG…HSER), 65-136 (HNNN…INNN), 212-231 (SQNN…RNNT), and 393-420 (PLST…TTTT). Over residues 15–33 (TTPDETNNNSTSNSSNIST) the composition is skewed to low complexity. Over residues 79–98 (RTNNTSSLNCSLPATTQKGV) the composition is skewed to polar residues. The segment covering 99 to 136 (TTTTTTTLASSGNNNNNNNNNNNYHYHNNNNNSIINNN) has biased composition (low complexity). Positions 418–448 (TTTSAELALARKKKEEIKEQKKKDEEGLHLL) form a coiled coil. The region spanning 438–806 (KKKDEEGLHL…LCLLTASAWR (369 aa)) is the GRAS domain. Residues 445–507 (LHLLTLLLQC…RLVSSCLGIY (63 aa)) are leucine repeat I (LRI). The short motif at 452-456 (LQCAE) is the LxCxE motif element. The VHIID stretch occupies residues 526 to 591 (FQVFNGISPF…GGPPYVRLTG (66 aa)). The VHIID signature appears at 557-561 (VHIID). Positions 601 to 633 (ATGKRLSDFANKLGLPFEFFPVAEKVGNIDVEK) are leucine repeat II (LRII). The interval 642–729 (VAVHWLQHSL…QQLLSREIRN (88 aa)) is PFYRE. The interval 732–806 (AVGGPSRSGE…LCLLTASAWR (75 aa)) is SAW.

The protein belongs to the GRAS family. As to expression, expressed in shoot apical meristem, leaf primordia, between the cortex and the differentiating vessels in lower shoots and in root endodermis.

Its subcellular location is the nucleus. Its function is as follows. Putative transcription factor involved in asymmetric cell division. In Pisum sativum (Garden pea), this protein is Protein SCARECROW (SCR).